A 150-amino-acid polypeptide reads, in one-letter code: Photosystem II extrinsic protein V (150 aa).

The signal sequence occupies residues methionine 1–alanine 20. The heme c site is built by cysteine 50, cysteine 53, histidine 54, and histidine 105.

The protein belongs to the cytochrome c family. PsbV subfamily. As to quaternary structure, PSII is composed of 1 copy each of membrane proteins PsbA, PsbB, PsbC, PsbD, PsbE, PsbF, PsbH, PsbI, PsbJ, PsbK, PsbL, PsbM, PsbT, PsbY, PsbZ, Psb30/Ycf12, at least 3 peripheral proteins of the oxygen-evolving complex and a large number of cofactors. It forms dimeric complexes. The extrinsic subunits in red algae are PsbO (OEC33), PsbQ', cytochrome c-550 and PsbU. The cofactor is heme c.

Its subcellular location is the plastid. The protein resides in the chloroplast thylakoid membrane. One of the extrinsic, lumenal subunits of photosystem II (PSII). PSII is a light-driven water plastoquinone oxidoreductase, using light energy to abstract electrons from H(2)O, generating a proton gradient subsequently used for ATP formation. The extrinsic proteins stabilize the structure of photosystem II oxygen-evolving complex (OEC), the ion environment of oxygen evolution and protect the OEC against heat-induced inactivation. The protein is Photosystem II extrinsic protein V of Cyanidioschyzon merolae (strain NIES-3377 / 10D) (Unicellular red alga).